Consider the following 488-residue polypeptide: Secreted triacylglycerol lipase LIP1 (488 aa).

The first 26 residues, 1–26 (MPSMLSLFYLAQSLFLLLLFPLYGHA), serve as a signal peptide directing secretion. An intrachain disulfide couples Cys119 to Cys288. An N-linked (GlcNAc...) asparagine glycan is attached at Asn183. Catalysis depends on Ser201, which acts as the Nucleophile. Asn316 carries an N-linked (GlcNAc...) asparagine glycan. Active-site residues include Asp348 and His382. Positions 461-488 (SKSGSSLKSHSHSQTHKHRKDVSTISNA) are disordered. The span at 469 to 480 (SHSHSQTHKHRK) shows a compositional bias: basic residues.

It belongs to the AB hydrolase superfamily. Lipase family. Class Lip subfamily.

It is found in the secreted. The catalysed reaction is a triacylglycerol + H2O = a diacylglycerol + a fatty acid + H(+). It catalyses the reaction a monoacylglycerol + H2O = glycerol + a fatty acid + H(+). It carries out the reaction a diacylglycerol + H2O = a monoacylglycerol + a fatty acid + H(+). Inhibited by different metal ions including Fe(2+), Fe(3+), Cu(2+), and Zn(2+). The monovalent ions Na(+) and K(+) exhibit less dramatic inhibition. Functionally, secreted lipase that releases free fatty acids from monoacylglycerol and triacylglycerol but has no phospholipase or lysophospholipase activities. Has minor esterase activity. Due to an absence of fatty acid synthase genes in Malassezia species, secretory lipases are essential for the yeast to generate free fatty acids from degradation of sebum and assimilate them as lipid sources for growth. Plays important roles not only in lipid metabolism but also in the immune response of host cells and pathogenesis. Hydrolyzes lipids, such as Tween 20, 40 and 80, with Tween 80 being the best substrate. In Malassezia furfur (Pityriasis versicolor infection agent), this protein is Secreted triacylglycerol lipase LIP1.